Reading from the N-terminus, the 406-residue chain is UPF0754 membrane protein CYB_2931 (406 aa).

The next 2 membrane-spanning stretches (helical) occupy residues 1 to 21 (MAFW…YFTN) and 385 to 405 (IVNL…LFLL).

It belongs to the UPF0754 family.

The protein localises to the cell inner membrane. In Synechococcus sp. (strain JA-2-3B'a(2-13)) (Cyanobacteria bacterium Yellowstone B-Prime), this protein is UPF0754 membrane protein CYB_2931.